The sequence spans 307 residues: Thioredoxin-related transmembrane protein 2-B (307 aa).

Residues 1–19 (MALLTPLFAFLYHLPQVYK) form the signal peptide. Over 20–111 (WLLKPYYIAS…VILFFRLDIR (92 aa)) the chain is Extracellular. Residues 112 to 132 (LGLLYLTLCIVFLMTCKPPLY) form a helical membrane-spanning segment. Residues 132-269 (YMGPEYIKYF…LYQKSKKLGK (138 aa)) form the Thioredoxin domain. The Cytoplasmic segment spans residues 133–307 (MGPEYIKYFS…AMDTESKKDK (175 aa)). The disordered stretch occupies residues 268–307 (GKTKEKLERPSELVFSTVPEEEEPEAETISAMDTESKKDK). Basic and acidic residues predominate over residues 269–278 (KTKEKLERPS). The Di-lysine motif motif lies at 304–307 (KKDK).

As to quaternary structure, monomer. Homodimer; disulfide-linked. Occurs in both reduced and oxidized monomeric form. Oxidative conditions increase homodimerization.

Its subcellular location is the endoplasmic reticulum membrane. It localises to the mitochondrion membrane. In terms of biological role, endoplasmic reticulum and mitochondria-associated protein that probably functions as a regulator of cellular redox state and thereby regulates protein post-translational modification, protein folding and mitochondrial activity. In Danio rerio (Zebrafish), this protein is Thioredoxin-related transmembrane protein 2-B (tmx2b).